The sequence spans 343 residues: MSQLLGVAVLGAGHMGADHIRRLDSVVSGARVAAVADPAKERAEEAVAGLDGVLVHTEVAAALDAPGVEAVLIASPGPAHEEALLAAFARGLPVLCEKPMVPDSAGALRIVEAEARLGRRLAQVGFMRRYDAEYMGLKSLLDSGRLGRPLMLHCTHRNVSSPPGFTSAMLINSSVSHEIDAARWLLGQELTAVTVLRPRPSAHAPEGLLDPQFVLFETAGGALVDVEILVNSGFGYQVRCEAVCEAGSVRIGDAHTMVVTSAGGAYQEVAQDYLVRFADAYDREVREWVDATRRGQVTGPSAWDGYAASVVAEAGVRAQDTGDRMTVELAPRPDLYGQNPISR.

It belongs to the Gfo/Idh/MocA family. As to quaternary structure, homotetramer.

It catalyses the reaction myo-inositol + NAD(+) = scyllo-inosose + NADH + H(+). Its function is as follows. Involved in the oxidation of myo-inositol (MI) to 2-keto-myo-inositol (2KMI or 2-inosose). In Streptomyces avermitilis (strain ATCC 31267 / DSM 46492 / JCM 5070 / NBRC 14893 / NCIMB 12804 / NRRL 8165 / MA-4680), this protein is Inositol 2-dehydrogenase.